Consider the following 431-residue polypeptide: Serine--tRNA ligase (431 aa).

Residue 237-239 (TAE) coordinates L-serine. 268–270 (RSE) contributes to the ATP binding site. Residue Glu-291 coordinates L-serine. 355–358 (EISS) contributes to the ATP binding site. Position 390 (Ser-390) interacts with L-serine.

The protein belongs to the class-II aminoacyl-tRNA synthetase family. Type-1 seryl-tRNA synthetase subfamily. As to quaternary structure, homodimer. The tRNA molecule binds across the dimer.

Its subcellular location is the cytoplasm. The catalysed reaction is tRNA(Ser) + L-serine + ATP = L-seryl-tRNA(Ser) + AMP + diphosphate + H(+). The enzyme catalyses tRNA(Sec) + L-serine + ATP = L-seryl-tRNA(Sec) + AMP + diphosphate + H(+). It participates in aminoacyl-tRNA biosynthesis; selenocysteinyl-tRNA(Sec) biosynthesis; L-seryl-tRNA(Sec) from L-serine and tRNA(Sec): step 1/1. In terms of biological role, catalyzes the attachment of serine to tRNA(Ser). Is also able to aminoacylate tRNA(Sec) with serine, to form the misacylated tRNA L-seryl-tRNA(Sec), which will be further converted into selenocysteinyl-tRNA(Sec). This Neisseria gonorrhoeae (strain NCCP11945) protein is Serine--tRNA ligase.